The primary structure comprises 267 residues: Hydroxynaphthalene reductase-like protein Arp2 (267 aa).

Residues Ile-25, Asn-45, Asp-71, and Asn-98 each contribute to the NADP(+) site. Residues Ser-147 and Ser-148 each act as proton donor in the active site. NADP(+)-binding residues include Tyr-162, Lys-166, Val-195, and Thr-197. Tyr-162 (proton acceptor) is an active-site residue. Lys-166 (lowers pKa of active site Tyr) is an active-site residue.

It belongs to the short-chain dehydrogenases/reductases (SDR) family.

Hydroxynaphthalene reductase-like protein; part of the Pks2 gene cluster that mediates the formation of infectious structures (appressoria), enabling these fungi to kill insects faster. The product of the Pks2 gene cluster is different from the one of Pks1 and has still not been identified. This chain is Hydroxynaphthalene reductase-like protein Arp2, found in Metarhizium majus (strain ARSEF 297).